The sequence spans 762 residues: 5-methyltetrahydropteroyltriglutamate--homocysteine methyltransferase (762 aa).

5-methyltetrahydropteroyltri-L-glutamate contacts are provided by residues 17–20 (REWK) and lysine 111. L-homocysteine is bound by residues 435–437 (IGS) and glutamate 488. L-methionine-binding positions include 435–437 (IGS) and glutamate 488. Residues 519–520 (RC) and tryptophan 565 each bind 5-methyltetrahydropteroyltri-L-glutamate. L-homocysteine is bound at residue aspartate 603. Aspartate 603 contributes to the L-methionine binding site. Glutamate 609 is a 5-methyltetrahydropteroyltri-L-glutamate binding site. Residues histidine 645, cysteine 647, and glutamate 669 each coordinate Zn(2+). Catalysis depends on histidine 698, which acts as the Proton donor. Cysteine 730 contacts Zn(2+).

This sequence belongs to the vitamin-B12 independent methionine synthase family. Zn(2+) is required as a cofactor.

The catalysed reaction is 5-methyltetrahydropteroyltri-L-glutamate + L-homocysteine = tetrahydropteroyltri-L-glutamate + L-methionine. The protein operates within amino-acid biosynthesis; L-methionine biosynthesis via de novo pathway; L-methionine from L-homocysteine (MetE route): step 1/1. Catalyzes the transfer of a methyl group from 5-methyltetrahydrofolate to homocysteine resulting in methionine formation. The protein is 5-methyltetrahydropteroyltriglutamate--homocysteine methyltransferase of Bacillus cereus (strain G9842).